Here is a 912-residue protein sequence, read N- to C-terminus: Protein SLFN14 (912 aa).

The segment at 206 to 391 (ESTHVEFKRF…KVHKFKEALQ (186 aa)) is required for endoribonuclease activity. A required for ribosome binding region spans residues 392–571 (RHLFPVTQEE…QMGCEFFNLL (180 aa)). Residue 593–600 (CFPGVRKT) participates in ATP binding.

It belongs to the Schlafen family. Subgroup III subfamily. In terms of assembly, associates with ribosomes in an ATP-independent manner. It depends on Mg(2+) as a cofactor. Mn(2+) is required as a cofactor. In terms of tissue distribution, expressed in megakaryocytes and platelets (at protein level). Weakly expressed in melanocytes and malignant melanoma cells.

It localises to the nucleus. Shows no ribosome-associated and endoribonuclease activities. Functionally, displays polysome-associated endoribonuclease activity towards mRNAs and rRNAs. May play a role in RNA surveillance pathways by recognizing stalled ribosomes and triggering endonucleolytic cleavage of aberrant mRNAs. Cleaves different types of rRNAs and mRNAs in a magnesium- and manganese-dependent and ATP-independent manner. Involved in correct maturation of megakaryocytes and especially important for proplatelet extension. This Homo sapiens (Human) protein is Protein SLFN14.